Here is a 79-residue protein sequence, read N- to C-terminus: Large ribosomal subunit protein uL29 (79 aa).

This sequence belongs to the universal ribosomal protein uL29 family.

The chain is Large ribosomal subunit protein uL29 from Tropheryma whipplei (strain Twist) (Whipple's bacillus).